Here is a 155-residue protein sequence, read N- to C-terminus: Ribosome maturation factor RimP (155 aa).

The protein belongs to the RimP family.

It is found in the cytoplasm. Required for maturation of 30S ribosomal subunits. In Synechococcus sp. (strain CC9605), this protein is Ribosome maturation factor RimP.